Here is a 338-residue protein sequence, read N- to C-terminus: Holliday junction branch migration complex subunit RuvB (338 aa).

The large ATPase domain (RuvB-L) stretch occupies residues 1–179; sequence MTDLTTPIRT…FGIPVRLNFY (179 aa). ATP is bound by residues Leu18, Arg19, Gly60, Lys63, Thr64, Thr65, Arg169, Tyr179, and Arg216. Residue Thr64 participates in Mg(2+) binding. The segment at 180 to 250 is small ATPAse domain (RuvB-S); it reads THAELEQVIG…AADAALNRLE (71 aa). A head domain (RuvB-H) region spans residues 253-338; it reads ALGLDAMDRR…AGSQDGLFDK (86 aa). 3 residues coordinate DNA: Arg289, Arg308, and Arg313.

It belongs to the RuvB family. As to quaternary structure, homohexamer. Forms an RuvA(8)-RuvB(12)-Holliday junction (HJ) complex. HJ DNA is sandwiched between 2 RuvA tetramers; dsDNA enters through RuvA and exits via RuvB. An RuvB hexamer assembles on each DNA strand where it exits the tetramer. Each RuvB hexamer is contacted by two RuvA subunits (via domain III) on 2 adjacent RuvB subunits; this complex drives branch migration. In the full resolvosome a probable DNA-RuvA(4)-RuvB(12)-RuvC(2) complex forms which resolves the HJ.

It is found in the cytoplasm. The catalysed reaction is ATP + H2O = ADP + phosphate + H(+). Its function is as follows. The RuvA-RuvB-RuvC complex processes Holliday junction (HJ) DNA during genetic recombination and DNA repair, while the RuvA-RuvB complex plays an important role in the rescue of blocked DNA replication forks via replication fork reversal (RFR). RuvA specifically binds to HJ cruciform DNA, conferring on it an open structure. The RuvB hexamer acts as an ATP-dependent pump, pulling dsDNA into and through the RuvAB complex. RuvB forms 2 homohexamers on either side of HJ DNA bound by 1 or 2 RuvA tetramers; 4 subunits per hexamer contact DNA at a time. Coordinated motions by a converter formed by DNA-disengaged RuvB subunits stimulates ATP hydrolysis and nucleotide exchange. Immobilization of the converter enables RuvB to convert the ATP-contained energy into a lever motion, pulling 2 nucleotides of DNA out of the RuvA tetramer per ATP hydrolyzed, thus driving DNA branch migration. The RuvB motors rotate together with the DNA substrate, which together with the progressing nucleotide cycle form the mechanistic basis for DNA recombination by continuous HJ branch migration. Branch migration allows RuvC to scan DNA until it finds its consensus sequence, where it cleaves and resolves cruciform DNA. The sequence is that of Holliday junction branch migration complex subunit RuvB from Sphingopyxis alaskensis (strain DSM 13593 / LMG 18877 / RB2256) (Sphingomonas alaskensis).